The primary structure comprises 376 residues: Endo-1,4-beta-xylanase A (376 aa).

The first 18 residues, 1–18 (MHLASSLFLLATLPFGFA), serve as a signal peptide directing secretion. The GH10 domain maps to 55–355 (QRERAGLEDK…HPAYYGVVEA (301 aa)). Asn-100 carries an N-linked (GlcNAc...) asparagine glycan. Glu-170 (proton donor) is an active-site residue. Glu-277 functions as the Nucleophile in the catalytic mechanism. N-linked (GlcNAc...) asparagine glycosylation is present at Asn-358.

The protein belongs to the glycosyl hydrolase 10 (cellulase F) family.

Its subcellular location is the secreted. The enzyme catalyses Endohydrolysis of (1-&gt;4)-beta-D-xylosidic linkages in xylans.. It participates in glycan degradation; xylan degradation. With respect to regulation, partial inhibition of activity is detected in the presence of Ag(+), Cu2(+) and SDS. Like most fungal xylanases, activity is completely inhibited by Hg(2+) since Hg(2+) could interact with tryptophan residues and oxidize the indole ring. Beta-mercaptoethanol enhances the enzymatic activity by counteracting the oxidation effects of the S-S linkage between cysteine residues. Functionally, endo-1,4-beta-xylanase involved in the hydrolysis of xylan, a major structural heterogeneous polysaccharide found in plant biomass representing the second most abundant polysaccharide in the biosphere, after cellulose. Is most active on birchwood xylan (defined as 100%), moderate on beechwood xylan (96.8%) and soluble wheat arabinoxylan (84.5%), and weak on insoluble wheat arabinoxylan (19.7%). Hydrolyzes substrates into a mixture of xylobiose and xylotriose, but no xylose. No activity was detected in the presence of barley beta-glucan, carboxymethyl cellulose-sodium (CMC-Na), and Avicel. Acts as an alkali-tolerant xylanase, exhibiting 68.8% of the activity at pH 9.0, and even 31.8% at pH 10.0. The chain is Endo-1,4-beta-xylanase A from Humicola insolens (Soft-rot fungus).